A 421-amino-acid chain; its full sequence is Non-homologous end-joining factor LIF1 (421 aa).

The segment at 1–196 (MSQLTEFISC…VEQLAREREL (196 aa)) is interaction with NEJ1. A disordered region spans residues 365-421 (GIQISAGRSDEDYGDISGSESETDASAGEKKSSNHSEQSGNDREPCLQTESETDIET). The segment covering 391–409 (AGEKKSSNHSEQSGNDREP) has biased composition (basic and acidic residues).

It belongs to the XRCC4-XLF family. XLF subfamily. As to quaternary structure, interacts with DNL4 (via BRCT domain). Interacts (via N-terminus) with NEJ1 (via C-terminus); the interaction is direct. The DNL4-LIF1 complex interacts with POL4.

The protein localises to the cytoplasm. It localises to the nucleus. Functionally, involved in non-homologous repair of DNA double-strand breaks. Stabilizes DNL4. This Saccharomyces cerevisiae (strain ATCC 204508 / S288c) (Baker's yeast) protein is Non-homologous end-joining factor LIF1 (LIF1).